Here is a 459-residue protein sequence, read N- to C-terminus: Vacuolar fusion protein CCZ1 homolog (459 aa).

The protein belongs to the CCZ1 family.

In Nematostella vectensis (Starlet sea anemone), this protein is Vacuolar fusion protein CCZ1 homolog.